The primary structure comprises 186 residues: Elongation factor P (186 aa).

The protein belongs to the elongation factor P family.

The protein localises to the cytoplasm. It participates in protein biosynthesis; polypeptide chain elongation. Its function is as follows. Involved in peptide bond synthesis. Stimulates efficient translation and peptide-bond synthesis on native or reconstituted 70S ribosomes in vitro. Probably functions indirectly by altering the affinity of the ribosome for aminoacyl-tRNA, thus increasing their reactivity as acceptors for peptidyl transferase. The sequence is that of Elongation factor P from Prochlorococcus marinus (strain MIT 9313).